A 724-amino-acid polypeptide reads, in one-letter code: Eukaryotic elongation factor 2 kinase (724 aa).

Ala2 is modified (N-acetylalanine). Ser27 carries the phosphoserine modification. At Ser61 the chain carries Phosphoserine; by autocatalysis. Residues Ser70, Ser73, and Ser77 each carry the phosphoserine modification. The interval 80 to 93 (FKEAWKHAIEKAKH) is calmodulin-binding. The 211-residue stretch at 115–325 (RYNAVTGEWL…ICQSMGLTPF (211 aa)) folds into the Alpha-type protein kinase domain. At Ser242 the chain carries Phosphoserine. 295–301 (GDGNLGV) contributes to the ATP binding site. Thr347 and Thr352 each carry phosphothreonine; by autocatalysis. The interval 353–476 (EEKCGSPRIR…HESDEDSLGS (124 aa)) is disordered. The residue at position 358 (Ser358) is a Phosphoserine; by MAPK13 and CDK1. The segment covering 358–376 (SPRIRTLSSSRPPLLLRLS) has biased composition (low complexity). Residue Ser365 is modified to Phosphoserine; by autocatalysis, RPS6KA1 and RPS6KB1. Positions 385–403 (SDVTFDSLPSSPSSATPHS) are enriched in polar residues. A Phosphoserine modification is found at Ser391. A Phosphoserine; by AMPK modification is found at Ser397. Basic and acidic residues-rich tracts occupy residues 421 to 435 (GPRD…RDSE) and 444 to 469 (SEKR…RHES). Ser434, Ser444, and Ser469 each carry phosphoserine. Ser473 carries the phosphoserine; by autocatalysis modification. Ser476 is modified (phosphoserine). Position 499 is a phosphoserine; by PKA (Ser499).

This sequence belongs to the protein kinase superfamily. Alpha-type protein kinase family. As to quaternary structure, monomer or homodimer. Interacts with Calmodulin/CALM1; this interaction is strictly required for phosphorylation activity. Autophosphorylated at multiple residues, Thr-347 being the major site. Phosphorylated by AMP-activated protein kinase AMPK at Ser-397 leading to EEF2K activation and protein synthesis inhibition. Phosphorylated by TRPM7 at Ser-77 resulting in improved protein stability, higher EE2F phosphorylated and subsequently reduced rate of protein synthesis. Phosphorylation by other kinases such as CDK1 and MAPK13 at Ser-358 or RPS6KA1 and RPS6KB1 at Ser-365 instead decrease EEF2K activity and promote protein synthesis. As to expression, ubiquitously expressed. Particularly abundant in skeletal muscle and heart.

It carries out the reaction [translation elongation factor 2] + ATP = [translation elongation factor 2]-phosphate + ADP + H(+). With respect to regulation, undergoes calcium/calmodulin-dependent intramolecular autophosphorylation, and this results in it becoming partially calcium/calmodulin-independent. Threonine kinase that regulates protein synthesis by controlling the rate of peptide chain elongation. Upon activation by a variety of upstream kinases including AMPK or TRPM7, phosphorylates the elongation factor EEF2 at a single site, renders it unable to bind ribosomes and thus inactive. In turn, the rate of protein synthesis is reduced. The sequence is that of Eukaryotic elongation factor 2 kinase (Eef2k) from Mus musculus (Mouse).